Here is a 69-residue protein sequence, read N- to C-terminus: NADH dehydrogenase [ubiquinone] 1 beta subcomplex subunit 2 (69 aa).

Belongs to the complex I NDUFB2 subunit family. As to quaternary structure, complex I is composed of at least 49 different subunits.

It is found in the mitochondrion inner membrane. Its function is as follows. Accessory subunit of the mitochondrial membrane respiratory chain NADH dehydrogenase (Complex I), that is believed not to be involved in catalysis. Complex I functions in the transfer of electrons from NADH to the respiratory chain. The immediate electron acceptor for the enzyme is believed to be ubiquinone. The polypeptide is NADH dehydrogenase [ubiquinone] 1 beta subcomplex subunit 2 (Arabidopsis thaliana (Mouse-ear cress)).